The chain runs to 410 residues: L-sorbose 1-phosphate reductase (410 aa).

Positions 40, 69, and 70 each coordinate Zn(2+). NAD(+) is bound by residues arginine 221 and 309-310 (GT).

Belongs to the zinc-containing alcohol dehydrogenase family. It depends on Zn(2+) as a cofactor.

Its function is as follows. Reduces L-sorbose 1-phosphate to D-glucitol 6-phosphate. In Klebsiella pneumoniae, this protein is L-sorbose 1-phosphate reductase (sorE).